The sequence spans 102 residues: MVRYRVRSPSEPSHEVYRQQLHGQEQGHHGQEEQGLSPEHVEVYERTHGHSHYRRRHCSRRRLRRIHRQQHRSCRRRKRRSCRHRRKHRRGCRTRRRTCRRH.

Disordered stretches follow at residues 1-40 and 67-102; these read MVRY…SPEH and HRQQ…CRRH. Ser8, Ser10, and Ser37 each carry phosphoserine.

The protein belongs to the protamine P2 family. Interacts with TDRP. In terms of processing, proteolytic processing into mature chains is required for histone eviction during spermatogenesis. Transition proteins (TNP1 and TNP2) are required for processing. Testis.

It is found in the nucleus. It localises to the chromosome. Its function is as follows. Protamines substitute for histones in the chromatin of sperm during the haploid phase of spermatogenesis. They compact sperm DNA into a highly condensed, stable and inactive complex. In Pan troglodytes (Chimpanzee), this protein is Protamine-2 (PRM2).